The primary structure comprises 474 residues: NADH-ubiquinone oxidoreductase chain 4 (474 aa).

The next 13 membrane-spanning stretches (helical) occupy residues 34-54 (SFFLMLVLALFCALFTFDLMF), 86-106 (LYGLILVFLCLLTGFVAISTV), 115-135 (LKFYLIFFQFFLAVLGFIKCS), 137-157 (LIAFFFFYEVLMLGSVLVVFF), 167-187 (AVIYFVAWTQLGSLFVLLACL), 211-231 (AMTIYSLLFVGFGIKFPIWPL), 242-262 (ASTGFSIYLSGFLVKTALFGF), 276-295 (TFFLAVLVAGVIDSSLNMWS), 302-322 (LVAYCTIQEMNLIAIFFLKGD), 325-345 (LIAYGFLFTIMHALMSTLMFF), 373-393 (ALAIIFMVLFFSGILGTLKFV), 405-425 (VSWPIGVIFVVVVSAIGLIGF), and 454-474 (YIIFLCFAGLIFLTFLPFLMI).

The protein belongs to the complex I subunit 4 family.

It is found in the mitochondrion membrane. The enzyme catalyses a ubiquinone + NADH + 5 H(+)(in) = a ubiquinol + NAD(+) + 4 H(+)(out). Its function is as follows. Core subunit of the mitochondrial membrane respiratory chain NADH dehydrogenase (Complex I) that is believed to belong to the minimal assembly required for catalysis. Complex I functions in the transfer of electrons from NADH to the respiratory chain. The immediate electron acceptor for the enzyme is believed to be ubiquinone. This is NADH-ubiquinone oxidoreductase chain 4 (ND4) from Paramecium tetraurelia.